Here is a 625-residue protein sequence, read N- to C-terminus: 1,4-alpha-glucan branching enzyme GlgB (625 aa).

The active-site Nucleophile is Asp302. Glu355 acts as the Proton donor in catalysis.

It belongs to the glycosyl hydrolase 13 family. GlgB subfamily. Monomer.

It catalyses the reaction Transfers a segment of a (1-&gt;4)-alpha-D-glucan chain to a primary hydroxy group in a similar glucan chain.. It participates in glycan biosynthesis; glycogen biosynthesis. Its function is as follows. Catalyzes the formation of the alpha-1,6-glucosidic linkages in glycogen by scission of a 1,4-alpha-linked oligosaccharide from growing alpha-1,4-glucan chains and the subsequent attachment of the oligosaccharide to the alpha-1,6 position. This is 1,4-alpha-glucan branching enzyme GlgB from Albidiferax ferrireducens (strain ATCC BAA-621 / DSM 15236 / T118) (Rhodoferax ferrireducens).